We begin with the raw amino-acid sequence, 655 residues long: uncharacterized protein (655 aa).

The first 23 residues, 1–23 (MKRTIKYLSFLGLIPFLSITTIS), serve as a signal peptide directing secretion. Residue cysteine 24 is the site of N-palmitoyl cysteine attachment. The S-diacylglycerol cysteine moiety is linked to residue cysteine 24.

Belongs to the MG067/MG068/MG395 family.

It is found in the cell membrane. This is an uncharacterized protein from Mycoplasma capricolum subsp. capricolum (strain California kid / ATCC 27343 / NCTC 10154).